A 102-amino-acid polypeptide reads, in one-letter code: Small ribosomal subunit protein uS10 (102 aa).

Residues Gln34–Lys59 are disordered.

The protein belongs to the universal ribosomal protein uS10 family. Part of the 30S ribosomal subunit.

Its function is as follows. Involved in the binding of tRNA to the ribosomes. The chain is Small ribosomal subunit protein uS10 from Methanopyrus kandleri (strain AV19 / DSM 6324 / JCM 9639 / NBRC 100938).